The primary structure comprises 351 residues: MKRFVRTVLGDIDPKDLGICDCHDHLIKNWGPEAKEHPDFVMLSNEAAIKECLEFVHHGGRSIVTMDPPNVGRDVKRMVAIAEQLKGKLNIIMATGFHKAAFYDKGSSWLAQVPVNEIVPMLVAEIEEGMDLYNYSGPVVKRGKAKAGIIKAGTGYAAIDRLELKALEAVAITSITTGAPVLVHTQLGTMAYEAAQHLIDFGVNPRKIQLSHLNKNPDEYYYAKIIRELGVTLCFDGPDRVKYYPDCLLAKHIKYLVDLGFVKHITLALDAGRVLYQKHYGLEKGKECFGFAYLFERFIPLLKEVGVSDAAINTILVENLAEILAFDAPRQFNPKAVHPRVLALKKQLKIE.

6 residues coordinate Zn(2+): His23, His25, Lys151, His184, His212, and Asp270. Lys151 bears the N6-carboxylysine mark.

It belongs to the metallo-dependent hydrolases superfamily. Phosphotriesterase family. The cofactor is Zn(2+).

This is an uncharacterized protein from Mycoplasma pneumoniae (strain ATCC 29342 / M129 / Subtype 1) (Mycoplasmoides pneumoniae).